The primary structure comprises 387 residues: Phosphoglycerate kinase (387 aa).

Substrate contacts are provided by residues 21 to 23, Arg36, 59 to 62, Arg113, and Arg146; these read DLN and HLGR. Residues Lys197, Glu314, and 340 to 343 each bind ATP; that span reads GGDT.

Belongs to the phosphoglycerate kinase family. Monomer.

Its subcellular location is the cytoplasm. It carries out the reaction (2R)-3-phosphoglycerate + ATP = (2R)-3-phospho-glyceroyl phosphate + ADP. It participates in carbohydrate degradation; glycolysis; pyruvate from D-glyceraldehyde 3-phosphate: step 2/5. The polypeptide is Phosphoglycerate kinase (Pectobacterium atrosepticum (strain SCRI 1043 / ATCC BAA-672) (Erwinia carotovora subsp. atroseptica)).